Consider the following 79-residue polypeptide: UPF0180 protein BCAH187_A1552 (79 aa).

Belongs to the UPF0180 family.

This Bacillus cereus (strain AH187) protein is UPF0180 protein BCAH187_A1552.